Here is a 133-residue protein sequence, read N- to C-terminus: MVMNIRVLTPDRVICSTTADEVVLPGLTGQVGVLDGHAALITALETGLLRIKLNDKWTPIILCGGLAEIDRDRVTVLVNDVEELTDIGLSEATQELEKATLAVENAKTSKERLDASVELKKATARLEAVNYLS.

Belongs to the ATPase epsilon chain family. In terms of assembly, F-type ATPases have 2 components, CF(1) - the catalytic core - and CF(0) - the membrane proton channel. CF(1) has five subunits: alpha(3), beta(3), gamma(1), delta(1), epsilon(1). CF(0) has three main subunits: a, b and c.

It localises to the plastid. The protein localises to the chloroplast thylakoid membrane. Functionally, produces ATP from ADP in the presence of a proton gradient across the membrane. This Phaeodactylum tricornutum (strain CCAP 1055/1) protein is ATP synthase epsilon chain, chloroplastic.